A 402-amino-acid chain; its full sequence is Bisdemethoxycurcumin synthase (402 aa).

Cysteine 174 (acyl-thioester intermediate) is an active-site residue.

This sequence belongs to the thiolase-like superfamily. Chalcone/stilbene synthases family. As to quaternary structure, homodimer.

The enzyme catalyses 2 4-coumaroyl-CoA + malonyl-CoA + H2O + H(+) = bisdemethoxycurcumin + 2 CO2 + 3 CoA. Its pathway is secondary metabolite biosynthesis; flavonoid biosynthesis. Its function is as follows. Plant-specific type III polyketide synthase (PKS) that catalyzes the one-pot formation of the C6-C7-C6 diarylheptanoid scaffold of bisdemethoxycurcumin by the condensation of two molecules of 4-coumaroyl-CoA and one molecule of malonyl-CoA. This chain is Bisdemethoxycurcumin synthase, found in Oryza sativa subsp. japonica (Rice).